We begin with the raw amino-acid sequence, 339 residues long: tRNA methyltransferase 10 homolog A (339 aa).

Disordered stretches follow at residues 1–90 (MSSE…HDRK) and 282–339 (DKAC…SLPH). The span at 14–35 (NVDKKQGINEDQEESQKPRLGE) shows a compositional bias: basic and acidic residues. Positions 52 to 81 (KQWEEQRELRKQKRKEKRKRKKLERQCQME) form a coiled coil. Positions 61-74 (RKQKRKEKRKRKKL) are enriched in basic residues. The SAM-dependent MTase TRM10-type domain occupies 89–279 (RKRVRRDVVH…TILPQRKGAV (191 aa)). Over residues 300–309 (GGSDSDSSEE) the composition is skewed to acidic residues. Basic and acidic residues predominate over residues 310–330 (EYSRNELDSPHEEKQDKENHT). Ser336 is subject to Phosphoserine.

This sequence belongs to the class IV-like SAM-binding methyltransferase superfamily. TRM10 family. In terms of assembly, interacts with tRNA. In terms of tissue distribution, expressed in embryonic and fetal brain. It is expressed throughout the dorsal telencephalon at 8 and 11 weeks of gestation, with highest expression in ventricular zone and marginal zone. Detected in cerebellar cortex and nuclei, but not in dorsal telencephalon, at later stages.

It localises to the nucleus. The protein localises to the nucleolus. It carries out the reaction guanosine(9) in tRNA + S-adenosyl-L-methionine = N(1)-methylguanosine(9) in tRNA + S-adenosyl-L-homocysteine + H(+). Its function is as follows. S-adenosyl-L-methionine-dependent guanine N(1)-methyltransferase that catalyzes the formation of N(1)-methylguanine at position 9 (m1G9) in tRNAs. Probably not able to catalyze formation of N(1)-methyladenine at position 9 (m1A9) in tRNAs. The sequence is that of tRNA methyltransferase 10 homolog A (TRMT10A) from Homo sapiens (Human).